Consider the following 226-residue polypeptide: ATP-dependent dethiobiotin synthetase BioD (226 aa).

Residue 14-19 coordinates ATP; it reads GIGKTF. Thr18 provides a ligand contact to Mg(2+). Residue Lys39 is part of the active site. A substrate-binding site is contributed by Ser43. ATP is bound by residues Asp56, 117 to 120, 177 to 178, 206 to 208, and Asn213; these read EGVG, NT, and PHI. Mg(2+)-binding residues include Asp56 and Glu117.

The protein belongs to the dethiobiotin synthetase family. As to quaternary structure, homodimer. The cofactor is Mg(2+).

The protein localises to the cytoplasm. It catalyses the reaction (7R,8S)-7,8-diammoniononanoate + CO2 + ATP = (4R,5S)-dethiobiotin + ADP + phosphate + 3 H(+). It functions in the pathway cofactor biosynthesis; biotin biosynthesis; biotin from 7,8-diaminononanoate: step 1/2. Catalyzes a mechanistically unusual reaction, the ATP-dependent insertion of CO2 between the N7 and N8 nitrogen atoms of 7,8-diaminopelargonic acid (DAPA, also called 7,8-diammoniononanoate) to form a ureido ring. The protein is ATP-dependent dethiobiotin synthetase BioD of Xylella fastidiosa (strain 9a5c).